Here is a 315-residue protein sequence, read N- to C-terminus: Acetyl-coenzyme A carboxylase carboxyl transferase subunit alpha (315 aa).

The CoA carboxyltransferase C-terminal domain occupies 39 to 292 (LEDKSAKLLR…GDALEQELNG (254 aa)).

Belongs to the AccA family. Acetyl-CoA carboxylase is a heterohexamer composed of biotin carboxyl carrier protein (AccB), biotin carboxylase (AccC) and two subunits each of ACCase subunit alpha (AccA) and ACCase subunit beta (AccD).

It localises to the cytoplasm. It carries out the reaction N(6)-carboxybiotinyl-L-lysyl-[protein] + acetyl-CoA = N(6)-biotinyl-L-lysyl-[protein] + malonyl-CoA. Its pathway is lipid metabolism; malonyl-CoA biosynthesis; malonyl-CoA from acetyl-CoA: step 1/1. Its function is as follows. Component of the acetyl coenzyme A carboxylase (ACC) complex. First, biotin carboxylase catalyzes the carboxylation of biotin on its carrier protein (BCCP) and then the CO(2) group is transferred by the carboxyltransferase to acetyl-CoA to form malonyl-CoA. This chain is Acetyl-coenzyme A carboxylase carboxyl transferase subunit alpha, found in Sphingopyxis alaskensis (strain DSM 13593 / LMG 18877 / RB2256) (Sphingomonas alaskensis).